The following is a 250-amino-acid chain: Aquaporin (250 aa).

Residues 1–15 (MTRETLKTLQSTFGE) lie on the Cytoplasmic side of the membrane. Residues 16–36 (MVASFVFGFAVYSALLGSALT) form a helical membrane-spanning segment. Residues 37 to 42 (EQSAAR) lie on the Extracellular side of the membrane. Residues 43-63 (VIVGLTVGFSGICVIYSFCDV) traverse the membrane as a helical segment. Over 64 to 86 (TVAHFNPAITLAAILTCKLGVLR) the chain is Cytoplasmic. The NPA signature appears at 69-71 (NPA). The chain crosses the membrane as a helical span at residues 87 to 107 (GIGYIVAQYIGFILAVCALLP). The Extracellular segment spans residues 108–133 (CSPVGYKETLNIIRPTPSPFGGDNLN). A helical membrane pass occupies residues 134–154 (VFFTEFFLTAILVHVAFATAV). Over 155-179 (NPYKPKTDTEGKFVDPDEEEPVDRR) the chain is Cytoplasmic. Residues 180 to 200 (ITAPLCIGLTLGFLAFLGLAS) form a helical membrane-spanning segment. The Extracellular portion of the chain corresponds to 201–224 (SGGAFNPGLTLAPVIMSNTWNHFW). Positions 206–208 (NPG) match the NPG motif. Residues 225–245 (AYFAGQYLGGFVGGLLQVLVL) form a helical membrane-spanning segment. Topologically, residues 246–250 (YKLSF) are cytoplasmic.

It belongs to the MIP/aquaporin (TC 1.A.8) family.

It localises to the cell membrane. Its function is as follows. Water channel required to facilitate the transport of water across membranes. Involved in osmotolerance. This chain is Aquaporin (AQP), found in Encephalitozoon cuniculi (strain GB-M1) (Microsporidian parasite).